The primary structure comprises 494 residues: UPF0371 protein SPG_0310 (494 aa).

This sequence belongs to the UPF0371 family.

The protein is UPF0371 protein SPG_0310 of Streptococcus pneumoniae serotype 19F (strain G54).